The sequence spans 418 residues: Neurotensin receptor type 1 (418 aa).

The Extracellular segment spans residues 1 to 67 (MRLNSSAPGT…TDIYSKVLVT (67 aa)). Asn4, Asn37, and Asn41 each carry an N-linked (GlcNAc...) asparagine glycan. The chain crosses the membrane as a helical span at residues 68–88 (AVYLALFVVGTVGNTVTAFTL). Topologically, residues 89 to 102 (ARKKSLQSLQSTVH) are cytoplasmic. The helical transmembrane segment at 103-122 (YHLGSLALSDLLTLLLAMPV) threads the bilayer. Residues 123-142 (ELYNFIWVHHPWAFGDAGCR) lie on the Extracellular side of the membrane. An intrachain disulfide couples Cys141 to Cys224. A helical membrane pass occupies residues 143-164 (GYYFLRDACTYATALNVASLSV). Over 165-184 (ERYLAICHPFKAKTLMSRSR) the chain is Cytoplasmic. Residues 185–205 (TKKFISAIWLASALLAVPMLF) form a helical membrane-spanning segment. Over 206–234 (TMGEQNRSADGQHAGGLVCTPTIHTATVK) the chain is Extracellular. The helical transmembrane segment at 235–259 (VVIQVNTFMSFIFPMVVISVLNTII) threads the bilayer. Residues 260 to 303 (ANKLTVMVRQAAEQGQVCTVGGEHSTFSMAIEPGRVQALRHGVR) lie on the Cytoplasmic side of the membrane. A helical membrane pass occupies residues 304-325 (VLRAVVIAFVVCWLPYHVRRLM). The tract at residues 321-344 (VRRLMFCYISDEQWTPFLYDFYHY) is neurotensin binding. Topologically, residues 326 to 343 (FCYISDEQWTPFLYDFYH) are extracellular. Residues 344-364 (YFYMVTNALFYVSSTINPILY) traverse the membrane as a helical segment. The Cytoplasmic segment spans residues 365–418 (NLVSANFRHIFLATLACLCPVWRRRRKRPAFSRKADSVSSNHTLSSNATRETLY). S-palmitoyl cysteine attachment occurs at residues Cys381 and Cys383.

The protein belongs to the G-protein coupled receptor 1 family. Neurotensin receptor subfamily. NTSR1 sub-subfamily. In terms of assembly, interacts (palmitoylated form) with GNA11. N-glycosylated. In terms of processing, palmitoylated; this is required for normal localization at membrane rafts and normal GNA11-mediated activation of down-stream signaling cascades. The palmitoylation level increases in response to neurotensin treatment. In terms of tissue distribution, expressed in prostate (at protein level). Detected in colon and peripheral blood mononuclear cells. Detected at very low levels in brain.

The protein localises to the cell membrane. Its subcellular location is the membrane raft. G-protein coupled receptor for the tridecapeptide neurotensin (NTS). Signaling is effected via G proteins that activate a phosphatidylinositol-calcium second messenger system. Signaling leads to the activation of downstream MAP kinases and protects cells against apoptosis. This is Neurotensin receptor type 1 (NTSR1) from Homo sapiens (Human).